The primary structure comprises 296 residues: Ribosomal RNA small subunit methyltransferase J (296 aa).

S-adenosyl-L-methionine is bound at residue Asp205.

It belongs to the methyltransferase superfamily. RsmJ family.

The protein localises to the cytoplasm. It carries out the reaction guanosine(1516) in 16S rRNA + S-adenosyl-L-methionine = N(2)-methylguanosine(1516) in 16S rRNA + S-adenosyl-L-homocysteine + H(+). In terms of biological role, specifically methylates the guanosine in position 1516 of 16S rRNA. This Psychrobacter arcticus (strain DSM 17307 / VKM B-2377 / 273-4) protein is Ribosomal RNA small subunit methyltransferase J.